Here is a 341-residue protein sequence, read N- to C-terminus: MYSLSDFDFELPQELIAQTPLAERSASRLLHVAQDGMIDRAFADIVDLLNPGDLLVFNDTRVLKARFFGVKETGGKVEVLVERVIDSAHVHAQIRASKSPVPGMKIRLADAFDVIVGERAGEFYELQFPGDIFALIEAHGRLPLPPYIEHAADAYDETRYQTVYAKTPGAVAAPTAGLHFDQALLDTLKAKGVQFAYVTLHVGAGTFQPVRNENLAEHNMHSEWYTISQETVGAVHAAQAAGHNIVAVGTTSMRALESASQSGSLQAGSADTRLFITPGYTFKTVTRLITNFHLPKSTLLMLVSAFAGYDAIRAAYQHAISQRYRFFSYGDAMFLTRMPPC.

This sequence belongs to the QueA family. As to quaternary structure, monomer.

The protein localises to the cytoplasm. The enzyme catalyses 7-aminomethyl-7-carbaguanosine(34) in tRNA + S-adenosyl-L-methionine = epoxyqueuosine(34) in tRNA + adenine + L-methionine + 2 H(+). It participates in tRNA modification; tRNA-queuosine biosynthesis. Functionally, transfers and isomerizes the ribose moiety from AdoMet to the 7-aminomethyl group of 7-deazaguanine (preQ1-tRNA) to give epoxyqueuosine (oQ-tRNA). The sequence is that of S-adenosylmethionine:tRNA ribosyltransferase-isomerase from Herminiimonas arsenicoxydans.